The sequence spans 175 residues: Gamma-crystallin B (175 aa).

2 consecutive Beta/gamma crystallin 'Greek key' domains span residues 2–40 (GKITFFEDRGFQGRCYECSSDCPNLQTYFSRCNSVRVDS) and 41–83 (GCWM…RLIP). A connecting peptide region spans residues 84-88 (QHSGT). Beta/gamma crystallin 'Greek key' domains follow at residues 89-129 (YRMR…NVME) and 130-172 (GCWV…RRVM).

This sequence belongs to the beta/gamma-crystallin family.

Functionally, crystallins are the dominant structural components of the vertebrate eye lens. The sequence is that of Gamma-crystallin B (Crygb) from Rattus norvegicus (Rat).